The sequence spans 261 residues: Cell division protein DivIB (261 aa).

Residues 1–27 (MEKGKVVVLEDRVPKLKERRRQKANRR) are Cytoplasmic-facing. A helical transmembrane segment spans residues 28–48 (LIAYLSFFFLFILCVLYFQSP). Residues 47 to 117 (SPLGAVGHVE…PNTIAIHVRE (71 aa)) form an alpha region. The Extracellular portion of the chain corresponds to 49–261 (LGAVGHVEVS…KEDGDETTSP (213 aa)). The POTRA domain occupies 50-118 (GAVGHVEVSG…NTIAIHVREW (69 aa)). The beta stretch occupies residues 118-230 (WRRIAYVYDR…YPAIAAALDR (113 aa)). The segment at 231-260 (NVKGVIHLEVGSYFVPYSPPKKEDGDETTS) is gamma.

Belongs to the FtsQ/DivIB family. DivIB subfamily.

Its subcellular location is the cell membrane. In terms of biological role, cell division protein that may be involved in stabilizing or promoting the assembly of the division complex. This Geobacillus kaustophilus (strain HTA426) protein is Cell division protein DivIB.